A 585-amino-acid chain; its full sequence is Zinc finger protein C11D3.17 (585 aa).

2 consecutive C2H2-type zinc fingers follow at residues 31–53 and 59–82; these read FPCD…KACH and IPCP…QRFH. Phosphothreonine is present on T553.

It is found in the nucleus. This Schizosaccharomyces pombe (strain 972 / ATCC 24843) (Fission yeast) protein is Zinc finger protein C11D3.17.